A 365-amino-acid chain; its full sequence is Ribosomal RNA large subunit methyltransferase M (365 aa).

Residues Ser-194, 227–230, Asp-246, Asp-266, and Asp-284 contribute to the S-adenosyl-L-methionine site; that span reads CPGG. Lys-313 serves as the catalytic Proton acceptor.

It belongs to the class I-like SAM-binding methyltransferase superfamily. RNA methyltransferase RlmE family. RlmM subfamily. In terms of assembly, monomer.

It localises to the cytoplasm. The enzyme catalyses cytidine(2498) in 23S rRNA + S-adenosyl-L-methionine = 2'-O-methylcytidine(2498) in 23S rRNA + S-adenosyl-L-homocysteine + H(+). Its function is as follows. Catalyzes the 2'-O-methylation at nucleotide C2498 in 23S rRNA. This chain is Ribosomal RNA large subunit methyltransferase M, found in Pasteurella multocida (strain Pm70).